A 192-amino-acid polypeptide reads, in one-letter code: Cytidylate kinase (192 aa).

7 to 15 contributes to the ATP binding site; sequence GPAGSGKST.

Belongs to the cytidylate kinase family. Type 2 subfamily.

Its subcellular location is the cytoplasm. It carries out the reaction CMP + ATP = CDP + ADP. The catalysed reaction is dCMP + ATP = dCDP + ADP. This Haloarcula marismortui (strain ATCC 43049 / DSM 3752 / JCM 8966 / VKM B-1809) (Halobacterium marismortui) protein is Cytidylate kinase.